Reading from the N-terminus, the 421-residue chain is Testin (421 aa).

In terms of domain architecture, PET spans 92 to 199 (MILTNPVAAK…GDVKLPCEMD (108 aa)). The disordered stretch occupies residues 133–164 (EKQPVAGSEGAQYRKKQLAKQLPAHDQDPSKC). A compositionally biased stretch (basic and acidic residues) spans 155–164 (PAHDQDPSKC). 3 consecutive LIM zinc-binding domains span residues 234 to 297 (YSCY…CDSE), 299 to 359 (PRCA…NHAV), and 362 to 421 (QGCH…KRMS).

This sequence belongs to the prickle / espinas / testin family. In terms of assembly, interacts via LIM domain 1 with ZYX. Interacts (via LIM domain 3) with ENAH and VASP. Interacts with ALKBH4, talin, actin, alpha-actinin, GRIP1 and PXN. Interacts (via LIM domain 2) with ACTL7A (via N-terminus). Heterodimer with ACTL7A; the heterodimer interacts with ENAH to form a heterotrimer.

Its subcellular location is the cytoplasm. The protein resides in the cell junction. The protein localises to the focal adhesion. Its function is as follows. Scaffold protein that may play a role in cell adhesion, cell spreading and in the reorganization of the actin cytoskeleton. Plays a role in the regulation of cell proliferation. May act as a tumor suppressor. The chain is Testin (TES) from Pan troglodytes (Chimpanzee).